A 104-amino-acid chain; its full sequence is Large ribosomal subunit protein uL24 (104 aa).

Belongs to the universal ribosomal protein uL24 family. Part of the 50S ribosomal subunit.

One of two assembly initiator proteins, it binds directly to the 5'-end of the 23S rRNA, where it nucleates assembly of the 50S subunit. In terms of biological role, one of the proteins that surrounds the polypeptide exit tunnel on the outside of the subunit. The sequence is that of Large ribosomal subunit protein uL24 from Nitrobacter winogradskyi (strain ATCC 25391 / DSM 10237 / CIP 104748 / NCIMB 11846 / Nb-255).